The sequence spans 191 residues: Holliday junction branch migration complex subunit RuvA (191 aa).

The tract at residues M1–A64 is domain I. Residues T65–H140 form a domain II region. Residues H140–P142 are flexible linker. A domain III region spans residues A143–K191.

The protein belongs to the RuvA family. Homotetramer. Forms an RuvA(8)-RuvB(12)-Holliday junction (HJ) complex. HJ DNA is sandwiched between 2 RuvA tetramers; dsDNA enters through RuvA and exits via RuvB. An RuvB hexamer assembles on each DNA strand where it exits the tetramer. Each RuvB hexamer is contacted by two RuvA subunits (via domain III) on 2 adjacent RuvB subunits; this complex drives branch migration. In the full resolvosome a probable DNA-RuvA(4)-RuvB(12)-RuvC(2) complex forms which resolves the HJ.

The protein localises to the cytoplasm. The RuvA-RuvB-RuvC complex processes Holliday junction (HJ) DNA during genetic recombination and DNA repair, while the RuvA-RuvB complex plays an important role in the rescue of blocked DNA replication forks via replication fork reversal (RFR). RuvA specifically binds to HJ cruciform DNA, conferring on it an open structure. The RuvB hexamer acts as an ATP-dependent pump, pulling dsDNA into and through the RuvAB complex. HJ branch migration allows RuvC to scan DNA until it finds its consensus sequence, where it cleaves and resolves the cruciform DNA. In Verminephrobacter eiseniae (strain EF01-2), this protein is Holliday junction branch migration complex subunit RuvA.